Reading from the N-terminus, the 427-residue chain is Trigger factor (427 aa).

One can recognise a PPIase FKBP-type domain in the interval 163–248 (GDTVVIDFVG…IHEVKEKEVP (86 aa)).

Belongs to the FKBP-type PPIase family. Tig subfamily.

The protein localises to the cytoplasm. The catalysed reaction is [protein]-peptidylproline (omega=180) = [protein]-peptidylproline (omega=0). Involved in protein export. Acts as a chaperone by maintaining the newly synthesized protein in an open conformation. Functions as a peptidyl-prolyl cis-trans isomerase. This is Trigger factor from Streptococcus gordonii (strain Challis / ATCC 35105 / BCRC 15272 / CH1 / DL1 / V288).